Consider the following 720-residue polypeptide: Replication restart protein PriA (720 aa).

The Helicase ATP-binding domain occupies isoleucine 200–phenylalanine 366. Lysine 213–valine 220 lines the ATP pocket. Positions asparagine 309–histidine 312 match the DEAH box motif. 8 residues coordinate Zn(2+): cysteine 425, cysteine 428, cysteine 434, cysteine 437, cysteine 452, cysteine 455, cysteine 465, and cysteine 468.

It belongs to the helicase family. PriA subfamily. As to quaternary structure, component of the replication restart primosome. Requires Zn(2+) as cofactor.

It carries out the reaction Couples ATP hydrolysis with the unwinding of duplex DNA by translocating in the 3'-5' direction.. The enzyme catalyses ATP + H2O = ADP + phosphate + H(+). Its function is as follows. Initiates the restart of stalled replication forks, which reloads the replicative helicase on sites other than the origin of replication. Recognizes and binds to abandoned replication forks and remodels them to uncover a helicase loading site. Promotes assembly of the primosome at these replication forks. The chain is Replication restart protein PriA from Buchnera aphidicola subsp. Schizaphis graminum (strain Sg).